Here is a 203-residue protein sequence, read N- to C-terminus: Galactoside O-acetyltransferase (203 aa).

Residues Asp17, Ser71, Asn85, and Asp93 each coordinate substrate. Asn85 provides a ligand contact to acetyl-CoA. The active-site Proton donor/acceptor is the His115. Acetyl-CoA contacts are provided by residues Ser142, Ala160, 165-166 (TK), Arg180, and Arg183.

It belongs to the transferase hexapeptide repeat family. Homotrimer. The N-terminus of this protein is heterogeneous because the initiator methionine is only partially cleaved.

The protein localises to the cytoplasm. The catalysed reaction is a beta-D-galactoside + acetyl-CoA = a 6-acetyl-beta-D-galactoside + CoA. Its function is as follows. Catalyzes the CoA-dependent transfer of an acetyl group to the 6-O-methyl position of a range of galactosides, glucosides, and lactosides. May assist cellular detoxification by acetylating non-metabolizable pyranosides, thereby preventing their reentry into the cell. This is Galactoside O-acetyltransferase (lacA) from Escherichia coli (strain K12).